Reading from the N-terminus, the 729-residue chain is Sodium-dependent neutral amino acid transporter B(0)AT2 (729 aa).

Residues 1–69 (MPKNSKVVKR…ERPAWNSKLQ (69 aa)) lie on the Cytoplasmic side of the membrane. Ser-25 and Ser-55 each carry phosphoserine. The interval 42–61 (DVQEEKDTDAEDGSEADDER) is disordered. Residues 43 to 59 (VQEEKDTDAEDGSEADD) are compositionally biased toward acidic residues. The next 3 helical transmembrane spans lie at 70-90 (YILAQVGFSVGLGNVWRFPYL), 98-117 (AYLLPYLILLLVIGIPLFFL), and 142-162 (GIGFASCVVCYFVALYYNVII). Residues 163–225 (GWTLFYFSQS…SSISDSGGLN (63 aa)) lie on the Extracellular side of the membrane. An N-linked (GlcNAc...) asparagine glycan is attached at Asn-187. 2 consecutive transmembrane segments (helical) span residues 226–244 (WKMTVCLLVAWVMVCLAMI) and 253–270 (IMYFSSLFPYVVLICFLI). Asn-276 is a glycosylation site (N-linked (GlcNAc...) asparagine). 2 helical membrane passes run 306 to 323 (VFFALGLGFGGVIAFSSY) and 335 to 356 (VLVSFINFFTSVLATLVVFAVL). Residues 357–452 (GFKANIVNEK…FIAFTEAMTH (96 aa)) lie on the Extracellular side of the membrane. N-linked (GlcNAc...) asparagine glycosylation is found at Asn-383 and Asn-394. The next 5 membrane-spanning stretches (helical) occupy residues 453–472 (FPASPFWSVMFFLMLINLGL), 496–514 (ILTVICCLLAFCIGLIFVQ), 530–550 (TLPLLIVVILENIAVSFVYGI), 571–592 (YMWKYISPLMLLTLLIASIVNM), and 620–642 (VVCFSLMVLAILPVPVVFIIRRC). The Cytoplasmic segment spans residues 643–729 (NLIDDSSGNL…DMPDMPESDL (87 aa)). Phosphoserine is present on residues Ser-687, Ser-699, and Ser-701.

Belongs to the sodium:neurotransmitter symporter (SNF) (TC 2.A.22) family. SLC6A15 subfamily. As to expression, significant expressed in brain, lung and kidney. In brain, mainly expressed int the cortex, the cerebellum and the brain stem.

Its subcellular location is the membrane. It catalyses the reaction L-pipecolate(in) + Na(+)(in) = L-pipecolate(out) + Na(+)(out). It carries out the reaction L-leucine(in) + Na(+)(in) = L-leucine(out) + Na(+)(out). The catalysed reaction is L-isoleucine(in) + Na(+)(in) = L-isoleucine(out) + Na(+)(out). The enzyme catalyses L-methionine(in) + Na(+)(in) = L-methionine(out) + Na(+)(out). It catalyses the reaction L-proline(in) + Na(+)(in) = L-proline(out) + Na(+)(out). It carries out the reaction L-alanine(in) + Na(+)(in) = L-alanine(out) + Na(+)(out). The catalysed reaction is L-asparagine(in) + Na(+)(in) = L-asparagine(out) + Na(+)(out). The enzyme catalyses L-valine(in) + Na(+)(in) = L-valine(out) + Na(+)(out). It catalyses the reaction L-cysteine(in) + Na(+)(in) = L-cysteine(out) + Na(+)(out). It carries out the reaction L-glutamine(in) + Na(+)(in) = L-glutamine(out) + Na(+)(out). The catalysed reaction is L-serine(in) + Na(+)(in) = L-serine(out) + Na(+)(out). The enzyme catalyses L-threonine(in) + Na(+)(in) = L-threonine(out) + Na(+)(out). It catalyses the reaction L-phenylalanine(in) + Na(+)(in) = L-phenylalanine(out) + Na(+)(out). Its function is as follows. Functions as a sodium-dependent neutral amino acid transporter. Exhibits preference for methionine and for the branched-chain amino acids, particularly leucine, valine and isoleucine. Can also transport low-affinity substrates such as alanine, phenylalanine, glutamine and pipecolic acid. Mediates the saturable, pH-sensitive and electrogenic cotransport of proline and sodium ions with a stoichiometry of 1:1. May have a role as transporter for neurotransmitter precursors into neurons. In contrast to other members of the neurotransmitter transporter family, does not appear to be chloride-dependent. This chain is Sodium-dependent neutral amino acid transporter B(0)AT2 (Slc6a15), found in Mus musculus (Mouse).